We begin with the raw amino-acid sequence, 112 residues long: ATP-dependent Clp protease adapter protein ClpS (112 aa).

Belongs to the ClpS family. As to quaternary structure, binds to the N-terminal domain of the chaperone ClpA.

In terms of biological role, involved in the modulation of the specificity of the ClpAP-mediated ATP-dependent protein degradation. The chain is ATP-dependent Clp protease adapter protein ClpS from Rhodococcus opacus (strain B4).